A 514-amino-acid polypeptide reads, in one-letter code: Glutamate--cysteine ligase (514 aa).

Belongs to the glutamate--cysteine ligase type 1 family. Type 1 subfamily.

It catalyses the reaction L-cysteine + L-glutamate + ATP = gamma-L-glutamyl-L-cysteine + ADP + phosphate + H(+). It functions in the pathway sulfur metabolism; glutathione biosynthesis; glutathione from L-cysteine and L-glutamate: step 1/2. This chain is Glutamate--cysteine ligase, found in Enterobacter sp. (strain 638).